Consider the following 461-residue polypeptide: Chromosomal replication initiator protein DnaA (461 aa).

The tract at residues 1-87 (MAVSLWQQCI…IGSRPSAKPV (87 aa)) is domain I, interacts with DnaA modulators. The interval 87–124 (VVQATAAIRPKPAASKAVEKPTFNAPQAEPAITANHRS) is domain II. Residues 125 to 341 (NINPTYQFDN…GALNRVIANA (217 aa)) form a domain III, AAA+ region region. ATP-binding residues include glycine 169, glycine 171, lysine 172, and threonine 173. Residues 342-461 (NFTGRPITID…YANLIRTLSS (120 aa)) are domain IV, binds dsDNA.

The protein belongs to the DnaA family. In terms of assembly, oligomerizes as a right-handed, spiral filament on DNA at oriC.

The protein resides in the cytoplasm. Its function is as follows. Plays an essential role in the initiation and regulation of chromosomal replication. ATP-DnaA binds to the origin of replication (oriC) to initiate formation of the DNA replication initiation complex once per cell cycle. Binds the DnaA box (a 9 base pair repeat at the origin) and separates the double-stranded (ds)DNA. Forms a right-handed helical filament on oriC DNA; dsDNA binds to the exterior of the filament while single-stranded (ss)DNA is stabiized in the filament's interior. The ATP-DnaA-oriC complex binds and stabilizes one strand of the AT-rich DNA unwinding element (DUE), permitting loading of DNA polymerase. After initiation quickly degrades to an ADP-DnaA complex that is not apt for DNA replication. Binds acidic phospholipids. This is Chromosomal replication initiator protein DnaA from Shewanella piezotolerans (strain WP3 / JCM 13877).